Reading from the N-terminus, the 212-residue chain is Adenylate kinase (212 aa).

ATP is bound at residue 10–15 (GAGKGT). Residues 30–59 (AIGDIFRTIIKTSTSEAELINNYVKQGELI) are NMP. Residues Arg36, 57–59 (ELI), 85–88 (GYPR), and Gln92 each bind AMP. Residues 122–160 (GRYSCKNCGKIYNRYFLQPKTDNVCDVCGSSTFDYRKDD) are LID. ATP is bound at residue Arg123. Cys126 and Cys129 together coordinate Zn(2+). 132–133 (IY) lines the ATP pocket. Positions 146 and 149 each coordinate Zn(2+). Positions 157 and 168 each coordinate AMP. Lys196 contributes to the ATP binding site.

It belongs to the adenylate kinase family. Monomer.

The protein resides in the cytoplasm. The catalysed reaction is AMP + ATP = 2 ADP. Its pathway is purine metabolism; AMP biosynthesis via salvage pathway; AMP from ADP: step 1/1. Catalyzes the reversible transfer of the terminal phosphate group between ATP and AMP. Plays an important role in cellular energy homeostasis and in adenine nucleotide metabolism. This chain is Adenylate kinase, found in Rickettsia africae (strain ESF-5).